The chain runs to 261 residues: Thiazole synthase (261 aa).

The active-site Schiff-base intermediate with DXP is the Lys-102. 1-deoxy-D-xylulose 5-phosphate is bound by residues Gly-163, Ala-189–Gly-190, and Asn-211–Thr-212.

Belongs to the ThiG family. In terms of assembly, homotetramer. Forms heterodimers with either ThiH or ThiS.

It localises to the cytoplasm. The enzyme catalyses [ThiS sulfur-carrier protein]-C-terminal-Gly-aminoethanethioate + 2-iminoacetate + 1-deoxy-D-xylulose 5-phosphate = [ThiS sulfur-carrier protein]-C-terminal Gly-Gly + 2-[(2R,5Z)-2-carboxy-4-methylthiazol-5(2H)-ylidene]ethyl phosphate + 2 H2O + H(+). Its pathway is cofactor biosynthesis; thiamine diphosphate biosynthesis. In terms of biological role, catalyzes the rearrangement of 1-deoxy-D-xylulose 5-phosphate (DXP) to produce the thiazole phosphate moiety of thiamine. Sulfur is provided by the thiocarboxylate moiety of the carrier protein ThiS. In vitro, sulfur can be provided by H(2)S. This is Thiazole synthase from Acinetobacter baumannii (strain AB307-0294).